We begin with the raw amino-acid sequence, 510 residues long: Scarecrow-like protein 29 (510 aa).

The tract at residues 90-142 (LDLPPEIQQPNDQSRKRSHDGFLEAQQVKKSARSKRKAIKSSEKSSKDGNKEG) is disordered. Over residues 102-111 (QSRKRSHDGF) the composition is skewed to basic and acidic residues. Over residues 119 to 128 (KSARSKRKAI) the composition is skewed to basic residues. Residues 129–142 (KSSEKSSKDGNKEG) show a composition bias toward basic and acidic residues. Positions 136–510 (KDGNKEGRWA…EAVSFCSLWK (375 aa)) constitute a GRAS domain. The tract at residues 143–205 (RWAEKLLNPC…HLSSSSVSSS (63 aa)) is leucine repeat I (LRI). The interval 224 to 294 (LLKFYEVSPW…GPPPRVRITV (71 aa)) is VHIID. A VHIID motif is present at residues 259–263 (LHIID). Residues 312–337 (NYGSQLLGFARSLKINLQISVLDKLQ) form a leucine repeat II (LRII) region. The PFYRE stretch occupies residues 347–435 (LIVCAQFRLH…RKLMEGEATK (89 aa)). Residues 438-510 (MNAGDMNEGK…EAVSFCSLWK (73 aa)) form an SAW region.

This sequence belongs to the GRAS family. In terms of tissue distribution, expressed in seedlings, roots and flowers.

The protein localises to the nucleus. In terms of biological role, probable transcription factor involved in plant development. The polypeptide is Scarecrow-like protein 29 (SCL29) (Arabidopsis thaliana (Mouse-ear cress)).